Consider the following 207-residue polypeptide: Superoxide dismutase [Mn] (207 aa).

Mn(2+)-binding residues include H28, H76, D160, and H164.

This sequence belongs to the iron/manganese superoxide dismutase family. As to quaternary structure, homotetramer. Mn(2+) serves as cofactor.

The protein localises to the secreted. It carries out the reaction 2 superoxide + 2 H(+) = H2O2 + O2. Its function is as follows. Destroys superoxide anion radicals which are normally produced within the cells and which are toxic to biological systems. In Mycolicibacterium smegmatis (Mycobacterium smegmatis), this protein is Superoxide dismutase [Mn] (sodA).